We begin with the raw amino-acid sequence, 96 residues long: RNA-binding protein Hfq (96 aa).

A Sm domain is found at D9–V68. The tract at residues A65–E96 is disordered. Over residues H70–E96 the composition is skewed to low complexity.

It belongs to the Hfq family. In terms of assembly, homohexamer.

In terms of biological role, RNA chaperone that binds small regulatory RNA (sRNAs) and mRNAs to facilitate mRNA translational regulation in response to envelope stress, environmental stress and changes in metabolite concentrations. Also binds with high specificity to tRNAs. The sequence is that of RNA-binding protein Hfq from Mannheimia succiniciproducens (strain KCTC 0769BP / MBEL55E).